Consider the following 231-residue polypeptide: Flagellar L-ring protein (231 aa).

The signal sequence occupies residues 1–18; sequence MNRLMIVSLLGIATALGG. Cys19 carries N-palmitoyl cysteine lipidation. Cys19 is lipidated: S-diacylglycerol cysteine. The disordered stretch occupies residues 118-141; that stretch reads LSLSAEYGGSRDAKGDSQAGQSNS.

This sequence belongs to the FlgH family. In terms of assembly, the basal body constitutes a major portion of the flagellar organelle and consists of four rings (L,P,S, and M) mounted on a central rod.

It localises to the cell outer membrane. It is found in the bacterial flagellum basal body. Its function is as follows. Assembles around the rod to form the L-ring and probably protects the motor/basal body from shearing forces during rotation. This Pseudomonas aeruginosa (strain UCBPP-PA14) protein is Flagellar L-ring protein.